An 80-amino-acid chain; its full sequence is Spermatid-specific protein S2 (80 aa).

The segment covering 1–36 (VKSRYHQRQYRARKRYAKARRTKKPKRRPKPPRKLR) has biased composition (basic residues). Residues 1-44 (VKSRYHQRQYRARKRYAKARRTKKPKRRPKPPRKLRYAPSKKQP) form a disordered region.

It localises to the nucleus. Its subcellular location is the chromosome. Functionally, involved in nuclear basic protein transition: histones are replaced by spermatid specific proteins which are themselves replaced by protamines in late spermatids. This Scyliorhinus canicula (Small-spotted catshark) protein is Spermatid-specific protein S2.